Consider the following 72-residue polypeptide: MSGLQAQDSACSLDKPSKDVVATETKPKKRICCACPDTKKLRDECIVEHGESACTKWIEAHILCLRSEGFKV.

Cu cation-binding residues include Cys-32 and Cys-33. The CHCH domain occupies 32-72 (CCACPDTKKLRDECIVEHGESACTKWIEAHILCLRSEGFKV). 2 short sequence motifs (cx9C motif) span residues 35–45 (CPDTKKLRDEC) and 54–64 (CTKWIEAHILC). 2 cysteine pairs are disulfide-bonded: Cys-35–Cys-64 and Cys-45–Cys-54.

Belongs to the COX17 family.

The protein resides in the mitochondrion intermembrane space. In terms of biological role, copper chaperone for cytochrome c oxidase (COX). Binds 2 copper ions and delivers them to the Cu(A) site of COX. The chain is Cytochrome c oxidase copper chaperone 2 (COX17-2) from Arabidopsis thaliana (Mouse-ear cress).